The chain runs to 20 residues: Isocitrate dehydrogenase [NADP] (20 aa).

It belongs to the isocitrate and isopropylmalate dehydrogenases family. Mn(2+) serves as cofactor. It depends on Mg(2+) as a cofactor.

It localises to the cytoplasm. It catalyses the reaction D-threo-isocitrate + NADP(+) = 2-oxoglutarate + CO2 + NADPH. The chain is Isocitrate dehydrogenase [NADP] from Naegleria fowleri (Brain eating amoeba).